The chain runs to 369 residues: DNA replication and repair protein RecF (369 aa).

Residue 30-37 coordinates ATP; it reads GDNGSGKT.

Belongs to the RecF family.

It is found in the cytoplasm. In terms of biological role, the RecF protein is involved in DNA metabolism; it is required for DNA replication and normal SOS inducibility. RecF binds preferentially to single-stranded, linear DNA. It also seems to bind ATP. The polypeptide is DNA replication and repair protein RecF (Pseudomonas paraeruginosa (strain DSM 24068 / PA7) (Pseudomonas aeruginosa (strain PA7))).